Consider the following 658-residue polypeptide: MTSIKISSDVFNKYHTNGKLRLSTGYVQEALEKQGYPGHDGVVQILKGKEDIGEQMGHGFTYRIRICDGIFQYNTLVSADIDDQIKREAEHLVEGAIIAITNLSTFSQGAGIKTSFLITGYTLLSRYHQTLSAPEVKPRSHSGNPAEHHGYRPNIVVEDVWPEAESITSEFQENMSNPPAAKMPKRESGGEASHNRVPAPEPHRSRAPPPPARRGPSNTERGVIPIAMVTPYVNNFRIHGMVSRKEDIKNIPAKNMKIFNFEITDSNGDTIRCTAFNETAESFHSTITENLSYYLSGGSVRQANKKFNNTGHDYEITLRNDSVVEAGGELLAAPKLNLKRVSLAEIAGHCGEMIDVLVIVEKMDAEATEFTSKAGKTLTKREMELIDESQALVRLTLWGDEAIKANVDDYHGKVIAFKGVIPREFNGGYSLGTGSGTRIIPVPEISGVSELYDWYTTEKPHSELKLISQTSGGMSEAPRTIAGLQEMQFGKDSDKGDYASVKAMITRINPNSALYKGCASEGCQKKVIESDGEYRCEKCNKSMNKFKWLYMMQFELSDETGQVYVTAFGDSAAKVVGKTAQEVGDLKDENLNEYNATFERLQFVPKMWRLRCKMETYNEEVRQKMTVFSVEEVNQDKYIENLKELIEQMKGIEDEGSY.

2 disordered regions span residues Pro134–Ile155 and Ser169–Gly222. Positions Phe236–Ala326 form a DNA-binding region, OB. The C4-type zinc-finger motif lies at Cys518–Cys539.

It belongs to the replication factor A protein 1 family. As to quaternary structure, component of the heterotrimeric canonical replication protein A complex (RPA).

Its subcellular location is the nucleus. Functionally, as part of the heterotrimeric replication protein A complex (RPA/RP-A), binds and stabilizes single-stranded DNA intermediates, that form during DNA replication or upon DNA stress. It prevents their reannealing and in parallel, recruits and activates different proteins and complexes involved in DNA metabolism. Thereby, it plays an essential role both in DNA replication and the cellular response to DNA damage. This Caenorhabditis briggsae protein is Probable replication factor A 73 kDa subunit.